The chain runs to 206 residues: Small ribosomal subunit protein uS4 (206 aa).

Residues 96–156 (TRLDNVVYRM…EKSRTQARIK (61 aa)) form the S4 RNA-binding domain.

Belongs to the universal ribosomal protein uS4 family. In terms of assembly, part of the 30S ribosomal subunit. Contacts protein S5. The interaction surface between S4 and S5 is involved in control of translational fidelity.

In terms of biological role, one of the primary rRNA binding proteins, it binds directly to 16S rRNA where it nucleates assembly of the body of the 30S subunit. Functionally, with S5 and S12 plays an important role in translational accuracy. This chain is Small ribosomal subunit protein uS4, found in Shewanella sp. (strain MR-4).